The chain runs to 188 residues: Probable manganese efflux pump MntP (188 aa).

6 helical membrane passes run 3–23 (FTATVLLAFGMSMDAFAASIG), 41–61 (LIFGAVETLTPLIGWGLGILA), 66–86 (LEWNHWIAFVLLIFLGGRMII), 106–128 (WLLVTTAIATSLDAMAVGVGLAF), 143–163 (ATLIMSTLGMMIGRFIGPMLG), and 168–188 (ILGGVVLIGIGVQILWTHFHG).

It belongs to the MntP (TC 9.B.29) family.

It is found in the cell inner membrane. Functionally, probably functions as a manganese efflux pump. The protein is Probable manganese efflux pump MntP of Salmonella typhimurium (strain LT2 / SGSC1412 / ATCC 700720).